The sequence spans 233 residues: Type IV secretion system protein PtlE homolog (233 aa).

A helical transmembrane segment spans residues 42-62; sequence VAWAALAVTALSLIAIATMLP.

This sequence belongs to the virB8 family.

The protein localises to the cell inner membrane. In Bordetella bronchiseptica (strain ATCC BAA-588 / NCTC 13252 / RB50) (Alcaligenes bronchisepticus), this protein is Type IV secretion system protein PtlE homolog (ptlE).